The sequence spans 239 residues: Leucine-rich repeat-containing protein 57 (239 aa).

Gly2 carries the N-myristoyl glycine lipid modification. LRR repeat units follow at residues 39 to 60 (NLRTIDLSNNKIESLPPLLIGK), 63 to 84 (LLKSLSLNNNKLTVLPDEICNL), 86 to 107 (KLETLSLNNNHLRELPSTFGQL), 109 to 131 (ALKTLSLSGNQLGALPPQLCSLR), 132 to 153 (HLDVMDLSKNQIRSIPDSVGEL), 154 to 175 (QVIELNLNQNQISQISVKISCC), 177 to 197 (RLKILRLEENCLELSMLPQSI), and 202 to 222 (QICLLAVEGNLFEIKKLRELE).

It is found in the membrane. The protein is Leucine-rich repeat-containing protein 57 (LRRC57) of Homo sapiens (Human).